A 375-amino-acid chain; its full sequence is ATP-dependent kinase YFH7 (375 aa).

66–74 (GPPGSGKST) is a binding site for ATP.

Belongs to the YFH7 family.

In terms of biological role, ATP-dependent kinase that could be involved in endoplasmic reticulum membrane assembly. This Zygosaccharomyces rouxii (strain ATCC 2623 / CBS 732 / NBRC 1130 / NCYC 568 / NRRL Y-229) protein is ATP-dependent kinase YFH7 (YFH7).